Here is a 125-residue protein sequence, read N- to C-terminus: Ribonuclease VapC19 (125 aa).

One can recognise a PINc domain in the interval 3–122 (LIDTTIAVDH…RHFPMFPDLQ (120 aa)). Mg(2+)-binding residues include D5 and D93.

It belongs to the PINc/VapC protein family. It depends on Mg(2+) as a cofactor.

Functionally, toxic component of a type II toxin-antitoxin (TA) system. An RNase. Its toxic effect is neutralized by coexpression with cognate antitoxin VapB19. This chain is Ribonuclease VapC19, found in Mycobacterium tuberculosis (strain CDC 1551 / Oshkosh).